Consider the following 438-residue polypeptide: Putative metabolite transport protein HI_0281 (438 aa).

The Cytoplasmic segment spans residues 1-17 (MSTQLRNNPMKVALASM). The helical transmembrane segment at 18–38 (VGTAIEFFDYYIYAAAAVLVF) threads the bilayer. The Periplasmic segment spans residues 39 to 52 (NTQFFHSDDPLSND). Residues 53–73 (LLSLSTLALAFFARPIGSALF) form a helical membrane-spanning segment. The Cytoplasmic segment spans residues 74–85 (GHFGDKIGRKKT). Residues 86–106 (LVASLVLMGGSTVVIGLLPNY) form a helical membrane-spanning segment. At 107 to 115 (AQIGIWAPI) the chain is on the periplasmic side. The helical transmembrane segment at 116-136 (LLCVCRVGQGIGLGGEWGGAA) threads the bilayer. The Cytoplasmic segment spans residues 137–156 (LVATENAPEGKRAWYGTFPQ). The helical transmembrane segment at 157 to 177 (LGAPIGLFVANGTFFLVSYLL) threads the bilayer. Over 178–181 (GHNA) the chain is Periplasmic. Residues 182–202 (LVEWAWRIPFVSSILLVAVGL) traverse the membrane as a helical segment. Residues 203-239 (YVRLTLHESHVFVEAEQKGKKLNAPVSVVFTKHLKPM) are Cytoplasmic-facing. The helical transmembrane segment at 240 to 260 (VIGTFIMVATYSLFYIMTAFA) threads the bilayer. Residues 261–286 (QAYSRTAPKLSEAGYALGLGIPANTF) lie on the Periplasmic side of the membrane. Residues 287 to 307 (TGLLLISAIVFGIFISISGFY) form a helical membrane-spanning segment. At 308 to 314 (ADKIGRR) the chain is on the cytoplasmic side. A helical membrane pass occupies residues 315-336 (KWLIWVTIAIGVLGLAMPLFLE). At 337–342 (NGTPVS) the chain is on the periplasmic side. The chain crosses the membrane as a helical span at residues 343 to 363 (VFAFLVIGMAIMGMTFGPMAA). Over 364–377 (LLPELFPTEVRYSG) the chain is Cytoplasmic. A helical membrane pass occupies residues 378-398 (ASLAYNLASIIGATIAAMISL). Topologically, residues 399-405 (KINASFG) are periplasmic. Residues 406 to 426 (VMGVGIYLAINALMTFLALLA) form a helical membrane-spanning segment. The Cytoplasmic portion of the chain corresponds to 427 to 438 (SKETKNVDLTEI).

It belongs to the major facilitator superfamily. Sugar transporter (TC 2.A.1.1) family.

The protein resides in the cell inner membrane. The polypeptide is Putative metabolite transport protein HI_0281 (Haemophilus influenzae (strain ATCC 51907 / DSM 11121 / KW20 / Rd)).